The following is a 447-amino-acid chain: MYKQSWKLLGRGQDADFTVAYINARIIDPESKLDIIGSLLTKGDKIVDFGQDLFNNGIPSTIDEVVDCNNNILMPGLIDIHVHFREPGQEHKETIHTGSKSAAAGGVTTVVCQPNTIPTISSIITAKYIKMRALESAYVNIEFYASITKPDNSLSDMALLKEAGAVGFTDDGMPVMNSLTMRQALSYSSMLDTVVAQHAEDLNLSNNGHINEGTVSYELGLKGIPDISESIIVNRDIALMKNIKNVHYHILHVSSQDSLNIIKQAKNQGLKVTCEVTPHHLTLTEQDVITHGTLAKINPPLRTENDRLSMVEGLKNGIIDCIATDHAPHEVNTKELPLDTAAFGIVGLETMLPISLELYHNGTISLIDLLATLTYKPANIIKVPRGRIKKGFVADLIILDLNHEWTIDILKFASKSKNSPFHNRKVKGKVLRTIVSGKTTYTAVRNI.

Zn(2+) contacts are provided by histidine 81 and histidine 83. Substrate is bound by residues 83 to 85 (HFR) and asparagine 115. The Zn(2+) site is built by aspartate 171, histidine 198, and histidine 252. Asparagine 298 contacts substrate. A Zn(2+)-binding site is contributed by aspartate 325. Aspartate 325 is a catalytic residue. Substrate contacts are provided by residues histidine 329 and 343–344 (FG).

This sequence belongs to the metallo-dependent hydrolases superfamily. DHOase family. Class I DHOase subfamily. The cofactor is Zn(2+).

It carries out the reaction (S)-dihydroorotate + H2O = N-carbamoyl-L-aspartate + H(+). Its pathway is pyrimidine metabolism; UMP biosynthesis via de novo pathway; (S)-dihydroorotate from bicarbonate: step 3/3. Catalyzes the reversible cyclization of carbamoyl aspartate to dihydroorotate. This chain is Dihydroorotase, found in Ehrlichia canis (strain Jake).